Consider the following 397-residue polypeptide: Probable pyruvate dehydrogenase E1 component subunit alpha, mitochondrial (397 aa).

Residues His86, Tyr112, Arg113, Gly159, Val161, Asp190, Gly191, Ala192, and Asn219 each contribute to the pyruvate site. Residues Tyr112, Arg113, Gly159, Val161, Asp190, Gly191, Ala192, Asn219, and His286 each contribute to the thiamine diphosphate site. Asp190 lines the Mg(2+) pocket. Asn219 is a Mg(2+) binding site.

Tetramer of 2 alpha and 2 beta subunits. The cofactor is thiamine diphosphate. Requires Mg(2+) as cofactor.

It is found in the mitochondrion matrix. It carries out the reaction N(6)-[(R)-lipoyl]-L-lysyl-[protein] + pyruvate + H(+) = N(6)-[(R)-S(8)-acetyldihydrolipoyl]-L-lysyl-[protein] + CO2. E1 activity is regulated by phosphorylation (inactivation) and dephosphorylation (activation) of the alpha subunit. Its function is as follows. The pyruvate dehydrogenase complex catalyzes the overall conversion of pyruvate to acetyl-CoA and CO(2). It contains multiple copies of three enzymatic components: pyruvate dehydrogenase (E1), dihydrolipoamide acetyltransferase (E2) and lipoamide dehydrogenase (E3). This chain is Probable pyruvate dehydrogenase E1 component subunit alpha, mitochondrial, found in Caenorhabditis elegans.